A 400-amino-acid polypeptide reads, in one-letter code: Nicotinate phosphoribosyltransferase (400 aa).

His-220 is modified (phosphohistidine; by autocatalysis).

The protein belongs to the NAPRTase family. Transiently phosphorylated on a His residue during the reaction cycle. Phosphorylation strongly increases the affinity for substrates and increases the rate of nicotinate D-ribonucleotide production. Dephosphorylation regenerates the low-affinity form of the enzyme, leading to product release.

It catalyses the reaction nicotinate + 5-phospho-alpha-D-ribose 1-diphosphate + ATP + H2O = nicotinate beta-D-ribonucleotide + ADP + phosphate + diphosphate. Its pathway is cofactor biosynthesis; NAD(+) biosynthesis; nicotinate D-ribonucleotide from nicotinate: step 1/1. Functionally, catalyzes the synthesis of beta-nicotinate D-ribonucleotide from nicotinate and 5-phospho-D-ribose 1-phosphate at the expense of ATP. In Salmonella heidelberg (strain SL476), this protein is Nicotinate phosphoribosyltransferase.